Reading from the N-terminus, the 273-residue chain is SAGA-associated factor 29 homolog B (273 aa).

The SGF29 C-terminal domain occupies 128–273; it reads EAYASLKGEQ…VVALPEGHRQ (146 aa). 2 histone H3K4me3 N-terminus binding regions span residues 171–173 and 220–223; these read DEE and GTTA. Residues 245–248 form a histone H3K4me3 binding region; it reads FDDD.

This sequence belongs to the SGF29 family. Expressed in roots, rosette leaves, cauline leaves, stems and flowers.

Its subcellular location is the nucleus. In terms of biological role, chromatin reader component of the transcription regulatory histone acetylation (HAT) complex SAGA. The chain is SAGA-associated factor 29 homolog B from Arabidopsis thaliana (Mouse-ear cress).